The primary structure comprises 227 residues: Octanoyltransferase (227 aa).

The BPL/LPL catalytic domain occupies 35–210; the sequence is DKTPDEIWLV…TFLQLVGYSA (176 aa). Substrate contacts are provided by residues 74–81, 141–143, and 154–156; these read RGGQVTYH, SLG, and GLA. The active-site Acyl-thioester intermediate is C172.

This sequence belongs to the LipB family.

The protein resides in the cytoplasm. The catalysed reaction is octanoyl-[ACP] + L-lysyl-[protein] = N(6)-octanoyl-L-lysyl-[protein] + holo-[ACP] + H(+). It participates in protein modification; protein lipoylation via endogenous pathway; protein N(6)-(lipoyl)lysine from octanoyl-[acyl-carrier-protein]: step 1/2. Catalyzes the transfer of endogenously produced octanoic acid from octanoyl-acyl-carrier-protein onto the lipoyl domains of lipoate-dependent enzymes. Lipoyl-ACP can also act as a substrate although octanoyl-ACP is likely to be the physiological substrate. In Pectobacterium atrosepticum (strain SCRI 1043 / ATCC BAA-672) (Erwinia carotovora subsp. atroseptica), this protein is Octanoyltransferase.